The following is an 88-amino-acid chain: UPF0367 protein syc2447_c (88 aa).

Belongs to the UPF0367 family.

This chain is UPF0367 protein syc2447_c, found in Synechococcus sp. (strain ATCC 27144 / PCC 6301 / SAUG 1402/1) (Anacystis nidulans).